A 488-amino-acid polypeptide reads, in one-letter code: Proline--tRNA ligase (488 aa).

Belongs to the class-II aminoacyl-tRNA synthetase family. ProS type 3 subfamily. As to quaternary structure, homodimer.

It is found in the cytoplasm. The catalysed reaction is tRNA(Pro) + L-proline + ATP = L-prolyl-tRNA(Pro) + AMP + diphosphate. Its function is as follows. Catalyzes the attachment of proline to tRNA(Pro) in a two-step reaction: proline is first activated by ATP to form Pro-AMP and then transferred to the acceptor end of tRNA(Pro). Can inadvertently accommodate and process cysteine. This Borreliella burgdorferi (strain ATCC 35210 / DSM 4680 / CIP 102532 / B31) (Borrelia burgdorferi) protein is Proline--tRNA ligase (proS).